The following is a 474-amino-acid chain: Receptor-transporting protein 3 (474 aa).

At 1–453 the chain is on the cytoplasmic side; that stretch reads MMEEDIGDTE…SCCEAACNCM (453 aa). A 3CxxC-type zinc finger spans residues 53-164; sequence TFARFHCPSC…SSNCEACLLG (112 aa). Positions 175-304 are disordered; sequence SKPPAPPLSP…ISCTSKPSTT (130 aa). Polar residues-rich tracts occupy residues 197–228 and 259–304; these read VTCS…NPTK and VTCS…PSTT. A helical membrane pass occupies residues 454–474; it reads SQSPLCCLAFLILFLLLWYLL.

The protein belongs to the TMEM7 family. In terms of assembly, interacts with TAS2R16. As to expression, expressed predominantly in the liver. Not detected in the olfactory epithelium.

It is found in the membrane. Its function is as follows. Promotes functional cell surface expression of the bitter taste receptors TAS2R16 and TAS2R43. The protein is Receptor-transporting protein 3 (Rtp3) of Mus musculus (Mouse).